Here is a 218-residue protein sequence, read N- to C-terminus: MGQKINPLGFRLGTTQSHHSLWFAQPKKYSEGLEEDKKIRDCIKKYVQKNIRISSGMEGIARIEIQKRIDLIQIIIYMGFPKLLIEDKPRRVEELQMNVQKELNCVNRKLNIAITRISNPYGDPNILAEFIAGQLKNRVSFRKAMKKAIELTEQANTKGIQVQIAGRIDGKEIARVEWIREGRVPLQTIEAKIDYCSYTVRTIYGVLGIKIWIFVDEE.

The KH type-2 domain maps to 47 to 118; it reads VQKNIRISSG…KLNIAITRIS (72 aa).

It belongs to the universal ribosomal protein uS3 family. In terms of assembly, part of the 30S ribosomal subunit.

The protein localises to the plastid. It is found in the chloroplast. In Lepidium virginicum (Virginia pepperweed), this protein is Small ribosomal subunit protein uS3c (rps3).